The chain runs to 483 residues: Proline--tRNA ligase (483 aa).

The protein belongs to the class-II aminoacyl-tRNA synthetase family. ProS type 3 subfamily. In terms of assembly, homodimer.

It localises to the cytoplasm. It carries out the reaction tRNA(Pro) + L-proline + ATP = L-prolyl-tRNA(Pro) + AMP + diphosphate. Catalyzes the attachment of proline to tRNA(Pro) in a two-step reaction: proline is first activated by ATP to form Pro-AMP and then transferred to the acceptor end of tRNA(Pro). This chain is Proline--tRNA ligase, found in Sulfurisphaera tokodaii (strain DSM 16993 / JCM 10545 / NBRC 100140 / 7) (Sulfolobus tokodaii).